The primary structure comprises 297 residues: MAKDLRGVMPALLTPFDNQQKLDIESLRRLVRFNIAQGIDGLYVGGSTGEAFVQSRAEREQVLEIVAEEAKGKVTLIAHVGTVSTEESQQLASAAHRYGFDAVSAVTPFYYPFSFEEHCDHYRAIIDSAEGLPMVVYNIPALSGVKLTLDQINTLVTLPGVGALKQTSGDLYQMEQIRRAHPDLVLYNGYDEIFASGLLAGADGGIGSTYNIMGWRYQGIVKALQEGDVAKAQHLQTECNKVIDLLIKTGVFRGLKTVLHYMDVVSVPLCRKPFSPVDEKYLPELKALAQQLMQERG.

2 residues coordinate aceneuramate: Ser-47 and Thr-48. Residue Tyr-137 is the Proton donor of the active site. The active-site Schiff-base intermediate with substrate is the Lys-165. Aceneuramate-binding residues include Thr-167, Gly-189, Asp-191, Glu-192, and Ser-208.

This sequence belongs to the DapA family. NanA subfamily. In terms of assembly, homotetramer.

It is found in the cytoplasm. It catalyses the reaction aceneuramate = aldehydo-N-acetyl-D-mannosamine + pyruvate. The protein operates within amino-sugar metabolism; N-acetylneuraminate degradation; D-fructose 6-phosphate from N-acetylneuraminate: step 1/5. Catalyzes the reversible aldol cleavage of N-acetylneuraminic acid (sialic acid; Neu5Ac) to form pyruvate and N-acetylmannosamine (ManNAc) via a Schiff base intermediate. The sequence is that of N-acetylneuraminate lyase from Citrobacter koseri (strain ATCC BAA-895 / CDC 4225-83 / SGSC4696).